A 302-amino-acid chain; its full sequence is Sulfate adenylyltransferase subunit 2 (302 aa).

Belongs to the PAPS reductase family. CysD subfamily. In terms of assembly, heterodimer composed of CysD, the smaller subunit, and CysN.

It carries out the reaction sulfate + ATP + H(+) = adenosine 5'-phosphosulfate + diphosphate. Its pathway is sulfur metabolism; hydrogen sulfide biosynthesis; sulfite from sulfate: step 1/3. Its function is as follows. With CysN forms the ATP sulfurylase (ATPS) that catalyzes the adenylation of sulfate producing adenosine 5'-phosphosulfate (APS) and diphosphate, the first enzymatic step in sulfur assimilation pathway. APS synthesis involves the formation of a high-energy phosphoric-sulfuric acid anhydride bond driven by GTP hydrolysis by CysN coupled to ATP hydrolysis by CysD. This is Sulfate adenylyltransferase subunit 2 from Serratia proteamaculans (strain 568).